We begin with the raw amino-acid sequence, 148 residues long: uncharacterized protein (148 aa).

The 62-residue stretch at 4-65 (LDRVDMQLVK…IPDIDKLGYM (62 aa)) folds into the HTH asnC-type domain. A DNA-binding region (H-T-H motif) is located at residues 23 to 42 (YRELADILNTTRQRIARRID).

This is an uncharacterized protein from Pyrococcus horikoshii (strain ATCC 700860 / DSM 12428 / JCM 9974 / NBRC 100139 / OT-3).